The sequence spans 1480 residues: Cystic fibrosis transmembrane conductance regulator (1480 aa).

Residues 1-77 (MQRSPLEKAS…KLINALRRCF (77 aa)) are Cytoplasmic-facing. The chain crosses the membrane as a helical span at residues 78–98 (FWRFMFYGIFLYLGEVTKAVQ). Residues 81–365 (FMFYGIFLYL…WAVQTWYDSL (285 aa)) form the ABC transmembrane type-1 1 domain. The Extracellular segment spans residues 99–122 (PLLLGRIIASYDPDNKEERSIAIY). A helical membrane pass occupies residues 123-146 (LGIGLCLLFIVRTLLLHPAIFGLH). At 147–195 (HIGMQMRIAMFSLIYKKTLKLSSRVLDKISIGQLVSLLSNNLNKFDEGL) the chain is on the cytoplasmic side. The chain crosses the membrane as a helical span at residues 196–216 (ALAHFVWIAPLQVALLMGLIW). The Extracellular portion of the chain corresponds to 217 to 222 (ELLQAS). A helical membrane pass occupies residues 223–243 (AFCGLGFLIVLALFQAGLGRM). Over 244–298 (MMKYRDQRAGKISERLVITSEMIENIQSVKAYCWEEAMEKMIENLRQTELKLTRK) the chain is Cytoplasmic. A helical transmembrane segment spans residues 299-319 (AAYVRYFNSSAFFFSGFFVVF). Residues 320-339 (LSVLPYALIKGIILRKIFTT) are Extracellular-facing. The chain crosses the membrane as a helical span at residues 340 to 358 (ISFCIVLRMAVTRQFPWAV). The Cytoplasmic segment spans residues 359 to 858 (QTWYDSLGAI…YLRYITVHKS (500 aa)). ATP-binding positions include Trp-401, Ser-434, 458 to 465 (GSTGAGKT), and Gln-493. The ABC transporter 1 domain maps to 423 to 646 (NGDDSLFFSN…RPDFSSKLMG (224 aa)). Residue Cys-524 is the site of S-palmitoyl cysteine attachment. Phosphoserine occurs at positions 549 and 660. Positions 654 to 831 (SAERRNSILT…EEINEEDLKE (178 aa)) are disordered R region. Ser-670 carries the post-translational modification Phosphoserine; by PKA. Residue Ser-686 is modified to Phosphoserine. A Glycyl lysine isopeptide (Lys-Gly) (interchain with G-Cter in ubiquitin) cross-link involves residue Lys-688. Residues Ser-700 and Ser-712 each carry the phosphoserine modification. The residue at position 717 (Thr-717) is a Phosphothreonine. Phosphoserine is present on residues Ser-737, Ser-753, Ser-768, Ser-790, Ser-795, and Ser-813. The chain crosses the membrane as a helical span at residues 859-879 (LIFVLIWCLVIFLAEVAASLV). Residues 859–1155 (LIFVLIWCLV…AVNSSIDVDS (297 aa)) enclose the ABC transmembrane type-1 2 domain. The Extracellular portion of the chain corresponds to 880–918 (VLWLLGNTPLQDKGNSTHSRNNSYAVIITSTSSYYVFYI). Residues Asn-894 and Asn-900 are each glycosylated (N-linked (GlcNAc...) asparagine). The discontinuously helical transmembrane segment at 919 to 939 (YVGVADTLLAMGFFRGLPLVH) threads the bilayer. Residues 940–990 (TLITVSKILHHKMLHSVLQAPMSTLNTLKAGGILNRFSKDIAILDDLLPLT) lie on the Cytoplasmic side of the membrane. Residues 991–1011 (IFDFIQLLLIVIGAIAVVAVL) form a helical membrane-spanning segment. At 1012–1013 (QP) the chain is on the extracellular side. The helical transmembrane segment at 1014-1034 (YIFVATVPVIVAFIMLRAYFL) threads the bilayer. Residues 1035–1095 (QTSQQLKQLE…TANWFLYLST (61 aa)) lie on the Cytoplasmic side of the membrane. Residues 1096-1116 (LRWFQMRIEMIFVIFFIAVTF) form a helical membrane-spanning segment. Over 1117-1130 (ISILTTGEGEGRVG) the chain is Extracellular. Residues 1131 to 1151 (IILTLAMNIMSTLQWAVNSSI) form a helical membrane-spanning segment. The Cytoplasmic segment spans residues 1152–1480 (DVDSLMRSVS…TEEEVQDTRL (329 aa)). The region spanning 1210–1443 (MTVKDLTAKY…RSLFRQAISP (234 aa)) is the ABC transporter 2 domain. Residues Tyr-1219 and 1244–1251 (GRTGSGKS) contribute to the ATP site. The tract at residues 1386-1480 (RTLKQAFADC…TEEEVQDTRL (95 aa)) is interaction with GORASP2. A lipid anchor (S-palmitoyl cysteine) is attached at Cys-1395. Residues Ser-1444 and Ser-1456 each carry the phosphoserine modification. The segment at 1452-1480 (HRNSSKCKSKPQIAALKEETEEEVQDTRL) is disordered. The segment covering 1470–1480 (ETEEEVQDTRL) has biased composition (acidic residues). Positions 1478-1480 (TRL) match the PDZ-binding motif.

The protein belongs to the ABC transporter superfamily. ABCC family. CFTR transporter (TC 3.A.1.202) subfamily. In terms of assembly, monomer; does not require oligomerization for channel activity. May form oligomers in the membrane. Interacts with SLC26A3, SLC26A6 and NHERF1. Interacts with SHANK2. Interacts with MYO6. Interacts (via C-terminus) with GOPC (via PDZ domain); this promotes CFTR internalization and thereby decreases channel activity. Interacts with SLC4A7 through NHERF1. Found in a complex with MYO5B and RAB11A. Interacts with ANO1. Interacts with SLC26A8. Interacts with AHCYL1; the interaction increases CFTR activity. Interacts with CSE1L. The core-glycosylated form interacts with GORASP2 (via PDZ GRASP-type 1 domain) in respone to ER stress. Interacts with MARCHF2; the interaction leads to CFTR ubiqtuitination and degradation. Interacts with ADGRG2. In terms of processing, N-glycosylated. Post-translationally, phosphorylated; cAMP treatment promotes phosphorylation and activates the channel. Dephosphorylation decreases the ATPase activity (in vitro). Phosphorylation at PKA sites activates the channel. Phosphorylation at PKC sites enhances the response to phosphorylation by PKA. Phosphorylated by AMPK; this inhibits channel activity. Ubiquitinated, leading to its degradation in the lysosome. Deubiquitination by USP10 in early endosomes enhances its endocytic recycling to the cell membrane. Ubiquitinated by RNF185 during ER stress. Ubiquitinated by MARCHF2.

It is found in the apical cell membrane. Its subcellular location is the early endosome membrane. The protein localises to the cell membrane. It localises to the recycling endosome membrane. The protein resides in the endoplasmic reticulum membrane. It is found in the nucleus. The enzyme catalyses ATP + H2O + closed Cl(-) channel = ADP + phosphate + open Cl(-) channel.. It catalyses the reaction chloride(in) = chloride(out). The catalysed reaction is hydrogencarbonate(in) = hydrogencarbonate(out). It carries out the reaction ATP + H2O = ADP + phosphate + H(+). Functionally, epithelial ion channel that plays an important role in the regulation of epithelial ion and water transport and fluid homeostasis. Mediates the transport of chloride ions across the cell membrane. Possesses an intrinsic ATPase activity and utilizes ATP to gate its channel; the passive flow of anions through the channel is gated by cycles of ATP binding and hydrolysis by the ATP-binding domains. The ion channel is also permeable to HCO(3)(-); selectivity depends on the extracellular chloride concentration. Exerts its function also by modulating the activity of other ion channels and transporters. Contributes to the regulation of the pH and the ion content of the epithelial fluid layer. Modulates the activity of the epithelial sodium channel (ENaC) complex, in part by regulating the cell surface expression of the ENaC complex. May regulate bicarbonate secretion and salvage in epithelial cells by regulating the transporter SLC4A7. Can inhibit the chloride channel activity of ANO1. Plays a role in the chloride and bicarbonate homeostasis during sperm epididymal maturation and capacitation. This Pan troglodytes (Chimpanzee) protein is Cystic fibrosis transmembrane conductance regulator.